The following is a 288-amino-acid chain: MSDYIVRATAADANIRAFAVTSKEMVENAREDHMTTPVMTAALGRLLSAGAMMGAMMKGDKDIITLQIQCSGPAKGLTVTADSHGNVKGFAMNPQVELPLNAAGKLDVGGALDLGILTVIKDMGLKEPYSGQCELKTGEIAEDLTYYFATSEQIPSAVGLGVLVDKDQSVKQSGGFIIQLMPFTPEDVVDRLEKKITEIDSVTQMLDRGLTPEQILEEILGDFGLEITDTTETRFHCDCSKERVSRALSTLSKKDLDSIIADGESIEVKCQFCNKAYEFTVDELKEMR.

Disulfide bonds link Cys237/Cys239 and Cys270/Cys273.

Belongs to the HSP33 family. Under oxidizing conditions two disulfide bonds are formed involving the reactive cysteines. Under reducing conditions zinc is bound to the reactive cysteines and the protein is inactive.

It is found in the cytoplasm. Its function is as follows. Redox regulated molecular chaperone. Protects both thermally unfolding and oxidatively damaged proteins from irreversible aggregation. Plays an important role in the bacterial defense system toward oxidative stress. The polypeptide is 33 kDa chaperonin (Agathobacter rectalis (strain ATCC 33656 / DSM 3377 / JCM 17463 / KCTC 5835 / VPI 0990) (Eubacterium rectale)).